The following is a 131-amino-acid chain: Protein Turandot M (131 aa).

The N-terminal stretch at 1 to 23 is a signal peptide; the sequence is MNPTIYLSCLMVFSVFLLGKVNA.

The protein belongs to the Turandot family.

The protein localises to the secreted. Functionally, a humoral factor that may play a role in stress tolerance. Requires Mekk1 expression in the fat body to regulate response to septic injury and consequent immune response. This Drosophila melanogaster (Fruit fly) protein is Protein Turandot M.